The sequence spans 184 residues: Probable chemoreceptor glutamine deamidase CheD (184 aa).

Belongs to the CheD family.

The enzyme catalyses L-glutaminyl-[protein] + H2O = L-glutamyl-[protein] + NH4(+). Its function is as follows. Probably deamidates glutamine residues to glutamate on methyl-accepting chemotaxis receptors (MCPs), playing an important role in chemotaxis. In Rhizobium rhizogenes (strain K84 / ATCC BAA-868) (Agrobacterium radiobacter), this protein is Probable chemoreceptor glutamine deamidase CheD.